The primary structure comprises 952 residues: Alpha-L-rhamnosidase (952 aa).

The N-terminal stretch at 1-21 (MKYNKLLFSLLLLAVFCFSCK) is a signal peptide. Alpha-L-rhamnose contacts are provided by residues aspartate 520, 524–525 (RE), aspartate 532, and tryptophan 594. Glutamate 525 acts as the Proton donor in catalysis. Glutamate 809 functions as the Proton acceptor in the catalytic mechanism. Position 826 (histidine 826) interacts with alpha-L-rhamnose.

It belongs to the glycosyl hydrolase 78 family.

Its subcellular location is the cell membrane. It carries out the reaction Hydrolysis of terminal non-reducing alpha-L-rhamnose residues in alpha-L-rhamnosides.. Its function is as follows. Alpha-L-rhamnosidase that may be involved in ulvan degradation. Ulvan is the main polysaccharide component of the Ulvales (green seaweed) cell wall. It is composed of disaccharide building blocks comprising 3-sulfated rhamnose (Rha3S) linked to D-glucuronic acid (GlcA), L-iduronic acid (IduA), or D-xylose (Xyl). The sequence is that of Alpha-L-rhamnosidase from Formosa agariphila (strain DSM 15362 / KCTC 12365 / LMG 23005 / KMM 3901 / M-2Alg 35-1).